The chain runs to 184 residues: Succinate dehydrogenase cytochrome b560 subunit, mitochondrial (184 aa).

A helical transmembrane segment spans residues 65-94; that stretch reads LTWMLSGFHRISGCVMAGTLLVGGLGFAVL. At 95–114 the chain is on the mitochondrial intermembrane side; that stretch reads PLDFTTFVEYIRGWNLPCAV. A helical membrane pass occupies residues 115–139; sequence TAVFKYIIAFPIIFHTLNGIRFLGF. Residue His-129 participates in heme binding. Residues 140-147 lie on the Mitochondrial matrix side of the membrane; the sequence is DLAKGVDN. A helical transmembrane segment spans residues 148-169; sequence IGQVYKSGWLVFGVSAVIALAI. Residues 170–172 lie on the Mitochondrial intermembrane side of the membrane; it reads VIN.

The protein belongs to the cytochrome b560 family. Component of complex II composed of four subunits: a flavoprotein (FP), iron-sulfur protein (IP), and a cytochrome b560 composed of two transmembrane proteins. It depends on heme as a cofactor.

It localises to the mitochondrion inner membrane. It participates in carbohydrate metabolism; tricarboxylic acid cycle. Functionally, membrane-anchoring subunit of succinate dehydrogenase (SDH) that is involved in complex II of the mitochondrial electron transport chain and is responsible for transferring electrons from succinate to ubiquinone (coenzyme Q). Mediates resistance to enteropathogenic E.coli infection. In Caenorhabditis briggsae, this protein is Succinate dehydrogenase cytochrome b560 subunit, mitochondrial (mev-1).